A 217-amino-acid chain; its full sequence is Pyridoxine/pyridoxamine 5'-phosphate oxidase (217 aa).

Residues 13–16 and Lys71 each bind substrate; that span reads RREY. FMN contacts are provided by residues 66–71, 81–82, Arg87, Lys88, and Gln110; these read RIVLLK and YT. Residues Tyr128, Arg132, and Ser136 each contribute to the substrate site. FMN-binding positions include 145-146 and Trp190; that span reads QS. 196–198 serves as a coordination point for substrate; that stretch reads RLH. Arg200 contributes to the FMN binding site.

Belongs to the pyridoxamine 5'-phosphate oxidase family. In terms of assembly, homodimer. FMN is required as a cofactor.

It carries out the reaction pyridoxamine 5'-phosphate + O2 + H2O = pyridoxal 5'-phosphate + H2O2 + NH4(+). The catalysed reaction is pyridoxine 5'-phosphate + O2 = pyridoxal 5'-phosphate + H2O2. It participates in cofactor metabolism; pyridoxal 5'-phosphate salvage; pyridoxal 5'-phosphate from pyridoxamine 5'-phosphate: step 1/1. It functions in the pathway cofactor metabolism; pyridoxal 5'-phosphate salvage; pyridoxal 5'-phosphate from pyridoxine 5'-phosphate: step 1/1. Functionally, catalyzes the oxidation of either pyridoxine 5'-phosphate (PNP) or pyridoxamine 5'-phosphate (PMP) into pyridoxal 5'-phosphate (PLP). The protein is Pyridoxine/pyridoxamine 5'-phosphate oxidase of Proteus mirabilis (strain HI4320).